The sequence spans 307 residues: Sporulation sigma-E factor-processing peptidase (307 aa).

Helical transmembrane passes span 7-27 (LIWMLNFGLDTILLMLCAVVL), 36-56 (LLLGGFIGSLIVLLMFTPFSH), 57-77 (LMVHPAIKILFSFFMVLMTFG), 89-109 (LTFYFATFVVGGGLMGVHFLF), and 127-147 (FGDPISWIFVLIGFPLLSYFS). Aspartate 183 is an active-site residue.

Belongs to the peptidase U4 family. Self-associates. Interacts with SigE. Interacts with SpoIIR.

The protein resides in the cell membrane. Functionally, probable aspartic protease that is responsible for the proteolytic cleavage of the RNA polymerase sigma E factor (SigE/spoIIGB) to yield the active peptide in the mother cell during sporulation. Responds to a signal from the forespore that is triggered by the extracellular signal protein SpoIIR. In Priestia megaterium (strain ATCC 12872 / QMB1551) (Bacillus megaterium), this protein is Sporulation sigma-E factor-processing peptidase.